Here is an 830-residue protein sequence, read N- to C-terminus: Interleukin-4 receptor subunit alpha (830 aa).

Residues 1–32 (MGWLCPGLTFSVSCLILVWAAGSGVTCVSPGG) form the signal peptide. Topologically, residues 33–240 (VRVLEWPICL…NYYEEPLEQR (208 aa)) are extracellular. An intrachain disulfide couples Cys-41 to Cys-51. N-linked (GlcNAc...) asparagine glycosylation is found at Asn-60 and Asn-78. Residues Cys-82 and Cys-94 are joined by a disulfide bond. N-linked (GlcNAc...) asparagine glycans are attached at residues Asn-120, Asn-142, and Asn-170. Residues 133–232 (APRNLMVHAN…WSPSVKWLNY (100 aa)) form the Fibronectin type-III domain. A Phosphoserine modification is found at Ser-172. N-linked (GlcNAc...) asparagine glycosylation is found at Asn-184 and Asn-217. The WSXWS motif motif lies at 220-224 (WSEWS). Residues 241 to 264 (LPLGVSISCVVILIICLSCYFGII) traverse the membrane as a helical segment. Topologically, residues 265–830 (RIKKEWWDQI…SPGPACMDTS (566 aa)) are cytoplasmic. A Box 1 motif motif is present at residues 270-278 (WWDQIPNPA). The span at 378 to 387 (ENEEEEEEED) shows a compositional bias: acidic residues. Disordered regions lie at residues 378-403 (ENEEEEEEEDKGSFCPSPENSGGSFQ) and 450-488 (MPWAEFPRVGSPEASSQGKEQPLNPEPSPQATPTQSLAS). Positions 444–564 (ENASAPMPWA…ETWEQILRQS (121 aa)) are required for IRS1 activation and IL4-induced cell growth. Tyr-504 is modified (phosphotyrosine). 2 disordered regions span residues 508-610 (STFL…EAGY) and 623-696 (CPGT…DGQK). Over residues 518–534 (GELDSDPELAEALEEVE) the composition is skewed to acidic residues. Positions 538 to 551 (PAAPQPSEPPPTLQ) are enriched in pro residues. The segment at 564–662 (SVLQRRAAPA…VPTPLFTFGL (99 aa)) is required for IL4-induced gene expression. Low complexity predominate over residues 570-582 (AAPAPASGPSSSG). 2 positions are modified to phosphotyrosine: Tyr-583 and Tyr-610. Positions 623 to 635 (CPGTSGLEPSSGE) are enriched in polar residues. Tyr-638 is subject to Phosphotyrosine. 2 stretches are compositionally biased toward pro residues: residues 646 to 655 (PGCPETPVPT) and 665 to 676 (EPPPSPQNPPFP). Positions 716–721 (IVYSAL) match the ITIM motif motif. The disordered stretch occupies residues 811–830 (SQTPTAVAMLSPGPACMDTS).

The protein belongs to the type I cytokine receptor family. Type 4 subfamily. The functional IL4 receptor is formed by initial binding of IL4 to IL4R. Subsequent recruitment to the complex of the common gamma chain, in immune cells, creates a type I receptor and, in non-immune cells, of IL13RA1 forms a type II receptor. IL4R can also interact with the IL13/IL13RA1 complex to form a similar type II receptor. Interacts with PIK3C3. Interacts with the SH2-containing phosphatases, PTPN6/SHIP1, PTPN11/SHIP2 and INPP5D/SHIP. Interacts with JAK1 through a Box 1-containing region; inhibited by SOCS5. Interacts with SOCS5; inhibits IL4 signaling. Interacts with JAK3. Interacts with CLM1. Interacts with IL13RA2. On IL4 binding, phosphorylated on C-terminal tyrosine residues.

Its subcellular location is the membrane. Its function is as follows. Receptor for both interleukin 4 and interleukin 13. Couples to the JAK1/2/3-STAT6 pathway. The IL4 response is involved in promoting Th2 differentiation. The IL4/IL13 responses are involved in regulating IgE production and, chemokine and mucus production at sites of allergic inflammation. In certain cell types, can signal through activation of insulin receptor substrates, IRS1/IRS2. The chain is Interleukin-4 receptor subunit alpha (IL4R) from Sus scrofa (Pig).